The sequence spans 287 residues: Pantothenate synthetase (287 aa).

30–37 (MGNLHSGH) lines the ATP pocket. Histidine 37 (proton donor) is an active-site residue. Position 61 (glutamine 61) interacts with (R)-pantoate. Glutamine 61 serves as a coordination point for beta-alanine. An ATP-binding site is contributed by 149 to 152 (GEKD). Glutamine 155 contributes to the (R)-pantoate binding site. ATP contacts are provided by residues valine 178 and 186–189 (LSSR).

It belongs to the pantothenate synthetase family. As to quaternary structure, homodimer.

The protein localises to the cytoplasm. The enzyme catalyses (R)-pantoate + beta-alanine + ATP = (R)-pantothenate + AMP + diphosphate + H(+). It functions in the pathway cofactor biosynthesis; (R)-pantothenate biosynthesis; (R)-pantothenate from (R)-pantoate and beta-alanine: step 1/1. Catalyzes the condensation of pantoate with beta-alanine in an ATP-dependent reaction via a pantoyl-adenylate intermediate. The chain is Pantothenate synthetase from Pseudomonas putida (strain ATCC 47054 / DSM 6125 / CFBP 8728 / NCIMB 11950 / KT2440).